A 333-amino-acid chain; its full sequence is N-acetyl-gamma-glutamyl-phosphate reductase (333 aa).

C145 is a catalytic residue.

This sequence belongs to the NAGSA dehydrogenase family. Type 1 subfamily.

The protein localises to the cytoplasm. It carries out the reaction N-acetyl-L-glutamate 5-semialdehyde + phosphate + NADP(+) = N-acetyl-L-glutamyl 5-phosphate + NADPH + H(+). It participates in amino-acid biosynthesis; L-arginine biosynthesis; N(2)-acetyl-L-ornithine from L-glutamate: step 3/4. Catalyzes the NADPH-dependent reduction of N-acetyl-5-glutamyl phosphate to yield N-acetyl-L-glutamate 5-semialdehyde. The chain is N-acetyl-gamma-glutamyl-phosphate reductase from Salinispora tropica (strain ATCC BAA-916 / DSM 44818 / JCM 13857 / NBRC 105044 / CNB-440).